Here is a 398-residue protein sequence, read N- to C-terminus: DNA replication and repair protein RecF (398 aa).

30–37 contributes to the ATP binding site; that stretch reads GSNGLGKT.

It belongs to the RecF family.

The protein resides in the cytoplasm. Functionally, the RecF protein is involved in DNA metabolism; it is required for DNA replication and normal SOS inducibility. RecF binds preferentially to single-stranded, linear DNA. It also seems to bind ATP. This is DNA replication and repair protein RecF from Renibacterium salmoninarum (strain ATCC 33209 / DSM 20767 / JCM 11484 / NBRC 15589 / NCIMB 2235).